A 195-amino-acid chain; its full sequence is Imidazoleglycerol-phosphate dehydratase (195 aa).

This sequence belongs to the imidazoleglycerol-phosphate dehydratase family.

The protein localises to the cytoplasm. The catalysed reaction is D-erythro-1-(imidazol-4-yl)glycerol 3-phosphate = 3-(imidazol-4-yl)-2-oxopropyl phosphate + H2O. It functions in the pathway amino-acid biosynthesis; L-histidine biosynthesis; L-histidine from 5-phospho-alpha-D-ribose 1-diphosphate: step 6/9. The polypeptide is Imidazoleglycerol-phosphate dehydratase (Bordetella avium (strain 197N)).